A 243-amino-acid chain; its full sequence is tRNA pseudouridine synthase A (243 aa).

The active-site Nucleophile is aspartate 53. Position 111 (tyrosine 111) interacts with substrate.

This sequence belongs to the tRNA pseudouridine synthase TruA family. As to quaternary structure, homodimer.

It catalyses the reaction uridine(38/39/40) in tRNA = pseudouridine(38/39/40) in tRNA. In terms of biological role, formation of pseudouridine at positions 38, 39 and 40 in the anticodon stem and loop of transfer RNAs. This Chlorobium limicola (strain DSM 245 / NBRC 103803 / 6330) protein is tRNA pseudouridine synthase A.